The primary structure comprises 444 residues: N-succinylarginine dihydrolase (444 aa).

Substrate is bound by residues 19 to 28, Asn-110, and 137 to 138; these read AGLSFGNVAS and HR. Glu-174 is an active-site residue. Arg-214 provides a ligand contact to substrate. His-250 is a catalytic residue. Asp-252 and Asn-362 together coordinate substrate. The active-site Nucleophile is Cys-368.

This sequence belongs to the succinylarginine dihydrolase family. In terms of assembly, homodimer.

It carries out the reaction N(2)-succinyl-L-arginine + 2 H2O + 2 H(+) = N(2)-succinyl-L-ornithine + 2 NH4(+) + CO2. Its pathway is amino-acid degradation; L-arginine degradation via AST pathway; L-glutamate and succinate from L-arginine: step 2/5. In terms of biological role, catalyzes the hydrolysis of N(2)-succinylarginine into N(2)-succinylornithine, ammonia and CO(2). This Shewanella amazonensis (strain ATCC BAA-1098 / SB2B) protein is N-succinylarginine dihydrolase.